We begin with the raw amino-acid sequence, 400 residues long: Acetate kinase (400 aa).

Asn-10 is a binding site for Mg(2+). Lys-17 lines the ATP pocket. Arg-91 serves as a coordination point for substrate. Asp-148 (proton donor/acceptor) is an active-site residue. Residues His-208–Gly-212, Asp-283–Arg-285, and Gly-331–Asn-335 each bind ATP. Glu-385 contacts Mg(2+).

Belongs to the acetokinase family. Homodimer. Requires Mg(2+) as cofactor. Mn(2+) is required as a cofactor.

The protein resides in the cytoplasm. It catalyses the reaction acetate + ATP = acetyl phosphate + ADP. It functions in the pathway metabolic intermediate biosynthesis; acetyl-CoA biosynthesis; acetyl-CoA from acetate: step 1/2. Its function is as follows. Catalyzes the formation of acetyl phosphate from acetate and ATP. Can also catalyze the reverse reaction. In Shewanella putrefaciens (strain CN-32 / ATCC BAA-453), this protein is Acetate kinase.